We begin with the raw amino-acid sequence, 242 residues long: NAD-dependent protein deacetylase (242 aa).

The region spanning 1 to 242 (MQQFEEVRTI…EFVEGLSSIK (242 aa)) is the Deacetylase sirtuin-type domain. NAD(+) contacts are provided by Ala23, Thr27, Phe34, Arg35, Gln102, Ile104, Asp105, and His120. Phe34 contributes to the nicotinamide binding site. Nicotinamide contacts are provided by Ile104 and Asp105. The Proton acceptor role is filled by His120. Zn(2+) contacts are provided by Cys128, Cys131, Cys148, and Cys151. 4 residues coordinate NAD(+): Thr187, Ser188, Asn213, and Ile231.

The protein belongs to the sirtuin family. Class U subfamily. It depends on Zn(2+) as a cofactor.

It is found in the cytoplasm. It carries out the reaction N(6)-acetyl-L-lysyl-[protein] + NAD(+) + H2O = 2''-O-acetyl-ADP-D-ribose + nicotinamide + L-lysyl-[protein]. Functionally, NAD-dependent protein deacetylase which modulates the activities of several enzymes which are inactive in their acetylated form. The protein is NAD-dependent protein deacetylase of Bacillus anthracis.